We begin with the raw amino-acid sequence, 394 residues long: Mitogen-activated protein kinase 2 (394 aa).

Residues 1 to 31 show a composition bias toward gly residues; it reads MRMEGGGGGGHGHHGGGGGGHGHHGGIGGGE. The tract at residues 1 to 33 is disordered; sequence MRMEGGGGGGHGHHGGGGGGHGHHGGIGGGEAQ. Residues 61–347 form the Protein kinase domain; that stretch reads VPPIRPVGRG…VDEALCHPYL (287 aa). Residues 67-75 and Lys90 each bind ATP; that span reads VGRGACGII. The active-site Proton acceptor is the Asp187. Tyr221 is subject to Phosphotyrosine.

Belongs to the protein kinase superfamily. CMGC Ser/Thr protein kinase family. MAP kinase subfamily. Post-translationally, the phosphorylation on Tyr-221 activates the enzyme. A conserved Thr, which must also be phosphorylated to activate the enzyme in closely related sequences, is replaced by Met-219 in this sequence.

The catalysed reaction is L-seryl-[protein] + ATP = O-phospho-L-seryl-[protein] + ADP + H(+). It catalyses the reaction L-threonyl-[protein] + ATP = O-phospho-L-threonyl-[protein] + ADP + H(+). This Oryza sativa subsp. japonica (Rice) protein is Mitogen-activated protein kinase 2 (MPK2).